We begin with the raw amino-acid sequence, 89 residues long: Small ribosomal subunit protein uS15 (89 aa).

This sequence belongs to the universal ribosomal protein uS15 family. As to quaternary structure, part of the 30S ribosomal subunit. Forms a bridge to the 50S subunit in the 70S ribosome, contacting the 23S rRNA.

Functionally, one of the primary rRNA binding proteins, it binds directly to 16S rRNA where it helps nucleate assembly of the platform of the 30S subunit by binding and bridging several RNA helices of the 16S rRNA. Its function is as follows. Forms an intersubunit bridge (bridge B4) with the 23S rRNA of the 50S subunit in the ribosome. The polypeptide is Small ribosomal subunit protein uS15 (Staphylococcus saprophyticus subsp. saprophyticus (strain ATCC 15305 / DSM 20229 / NCIMB 8711 / NCTC 7292 / S-41)).